The following is a 339-amino-acid chain: Ketol-acid reductoisomerase (NADP(+)) (339 aa).

The 182-residue stretch at 1–182 folds into the KARI N-terminal Rossmann domain; the sequence is MRVYYDRDAD…GGGRAGIIET (182 aa). NADP(+) is bound by residues 24–27, arginine 48, serine 51, and 83–86; these read YGSQ and DEGQ. Histidine 108 is an active-site residue. Residue glycine 134 participates in NADP(+) binding. The KARI C-terminal knotted domain occupies 183-328; that stretch reads TFKEEVETDL…EKLRAMMPWI (146 aa). Mg(2+) contacts are provided by aspartate 191, glutamate 195, glutamate 227, and glutamate 231. Residue serine 252 coordinates substrate.

This sequence belongs to the ketol-acid reductoisomerase family. Requires Mg(2+) as cofactor.

The catalysed reaction is (2R)-2,3-dihydroxy-3-methylbutanoate + NADP(+) = (2S)-2-acetolactate + NADPH + H(+). It carries out the reaction (2R,3R)-2,3-dihydroxy-3-methylpentanoate + NADP(+) = (S)-2-ethyl-2-hydroxy-3-oxobutanoate + NADPH + H(+). It participates in amino-acid biosynthesis; L-isoleucine biosynthesis; L-isoleucine from 2-oxobutanoate: step 2/4. It functions in the pathway amino-acid biosynthesis; L-valine biosynthesis; L-valine from pyruvate: step 2/4. Functionally, involved in the biosynthesis of branched-chain amino acids (BCAA). Catalyzes an alkyl-migration followed by a ketol-acid reduction of (S)-2-acetolactate (S2AL) to yield (R)-2,3-dihydroxy-isovalerate. In the isomerase reaction, S2AL is rearranged via a Mg-dependent methyl migration to produce 3-hydroxy-3-methyl-2-ketobutyrate (HMKB). In the reductase reaction, this 2-ketoacid undergoes a metal-dependent reduction by NADPH to yield (R)-2,3-dihydroxy-isovalerate. The protein is Ketol-acid reductoisomerase (NADP(+)) of Gluconobacter oxydans (strain 621H) (Gluconobacter suboxydans).